Reading from the N-terminus, the 476-residue chain is WASH complex subunit 1 (476 aa).

A required for WASH complex assembly region spans residues Met1–Arg54. Disordered stretches follow at residues Ser273–Asp412 and Gly427–Ser476. Residues Thr284–Asp296 show a composition bias toward polar residues. The span at Leu302–Pro333 shows a compositional bias: pro residues. The tract at residues Gln354 to Ser476 is VCA. The 23-residue stretch at Gly366–Val388 folds into the WH2 domain. Residues Ser387 to Gln403 are compositionally biased toward basic and acidic residues. Over residues Gly467–Ser476 the composition is skewed to acidic residues.

It belongs to the WASH1 family. Component of the WASH complex.

The protein localises to the early endosome membrane. It is found in the recycling endosome membrane. Functionally, acts as a nucleation-promoting factor at the surface of endosomes, where it recruits and activates the Arp2/3 complex to induce actin polymerization, playing a key role in the fission of tubules that serve as transport intermediates during endosome sorting. In Gallus gallus (Chicken), this protein is WASH complex subunit 1.